Here is a 335-residue protein sequence, read N- to C-terminus: tRNA methyltransferase 10 homolog A (335 aa).

Disordered stretches follow at residues 1–91 and 279–335; these read MSSE…DRKR and VPAH…PDPQ. A phosphoserine mark is found at Ser-22 and Ser-24. Residues 52–62 show a composition bias toward basic and acidic residues; sequence RLWEEQREQRK. Residues 52-84 are a coiled coil; the sequence is RLWEEQREQRKEKRKEKRKRKKLERRCQLESNS. Residues 63–75 are compositionally biased toward basic residues; that stretch reads EKRKEKRKRKKLE. The SAM-dependent MTase TRM10-type domain occupies 88–279; that stretch reads DRKRIRRHVA…TILPPRKGAV (192 aa). Residues 304-319 show a composition bias toward basic and acidic residues; it reads EGEHGRDDPGSPHKEQ. Residues 320–335 are compositionally biased toward low complexity; the sequence is QGQQSSSVSAVSPDPQ. A Phosphoserine modification is found at Ser-331.

The protein belongs to the class IV-like SAM-binding methyltransferase superfamily. TRM10 family. In terms of assembly, interacts with tRNA. Ubiquitously expressed. Is more abundant in brain and pancreatic islets compared to other tissues (at protein level).

The protein localises to the nucleus. The protein resides in the nucleolus. The catalysed reaction is guanosine(9) in tRNA + S-adenosyl-L-methionine = N(1)-methylguanosine(9) in tRNA + S-adenosyl-L-homocysteine + H(+). In terms of biological role, S-adenosyl-L-methionine-dependent guanine N(1)-methyltransferase that catalyzes the formation of N(1)-methylguanine at position 9 (m1G9) in tRNAs. Probably not able to catalyze formation of N(1)-methyladenine at position 9 (m1A9) in tRNAs. The polypeptide is tRNA methyltransferase 10 homolog A (Trmt10a) (Rattus norvegicus (Rat)).